The primary structure comprises 180 residues: CASP-like protein 2D1 (180 aa).

Residues methionine 1–lysine 7 are Cytoplasmic-facing. The helical transmembrane segment at valine 8–methionine 28 threads the bilayer. Topologically, residues alanine 29–glycine 48 are extracellular. The helical transmembrane segment at phenylalanine 49 to leucine 69 threads the bilayer. Residues serine 70 to aspartate 79 are Cytoplasmic-facing. Residues tryptophan 80–alanine 100 form a helical membrane-spanning segment. The Extracellular portion of the chain corresponds to alanine 101 to lysine 129. Residues alanine 130–valine 150 traverse the membrane as a helical segment. The Cytoplasmic segment spans residues serine 151–asparagine 180. The segment at serine 161 to asparagine 180 is disordered. A compositionally biased stretch (basic and acidic residues) spans glutamine 170–asparagine 180.

This sequence belongs to the Casparian strip membrane proteins (CASP) family. In terms of assembly, homodimer and heterodimers.

It localises to the cell membrane. The polypeptide is CASP-like protein 2D1 (Sorghum bicolor (Sorghum)).